An 86-amino-acid chain; its full sequence is Progonadoliberin-2 (86 aa).

The N-terminal stretch at 1–24 is a signal peptide; sequence MVSVARLVFMLGPLLCLGAQLSSS. At Q25 the chain carries Pyrrolidone carboxylic acid. G34 carries the post-translational modification Glycine amide.

Belongs to the GnRH family.

Its subcellular location is the secreted. In terms of biological role, stimulates the secretion of gonadotropins. This is Progonadoliberin-2 (gnrh2) from Oncorhynchus mykiss (Rainbow trout).